Here is a 271-residue protein sequence, read N- to C-terminus: Ribosomal RNA small subunit methyltransferase A (271 aa).

Residues Leu-20, Gly-45, Glu-66, Asp-90, and Asn-112 each contribute to the S-adenosyl-L-methionine site.

It belongs to the class I-like SAM-binding methyltransferase superfamily. rRNA adenine N(6)-methyltransferase family. RsmA subfamily.

Its subcellular location is the cytoplasm. The catalysed reaction is adenosine(1518)/adenosine(1519) in 16S rRNA + 4 S-adenosyl-L-methionine = N(6)-dimethyladenosine(1518)/N(6)-dimethyladenosine(1519) in 16S rRNA + 4 S-adenosyl-L-homocysteine + 4 H(+). Functionally, specifically dimethylates two adjacent adenosines (A1518 and A1519) in the loop of a conserved hairpin near the 3'-end of 16S rRNA in the 30S particle. May play a critical role in biogenesis of 30S subunits. This chain is Ribosomal RNA small subunit methyltransferase A, found in Blochmanniella floridana.